The following is a 417-amino-acid chain: Phosphoglycerate kinase 2 (417 aa).

Serine 2 carries the N-acetylserine modification. Serine 2 and serine 4 each carry phosphoserine. Lysine 11 is modified (N6-acetyllysine). 6 residues coordinate (2R)-3-phosphoglycerate: valine 23, aspartate 24, phenylalanine 25, asparagine 26, glutamine 38, and arginine 39. Lysine 48 bears the N6-acetyllysine mark. Positions 62, 63, 65, and 66 each coordinate (2R)-3-phosphoglycerate. N6-acetyllysine is present on residues lysine 75, lysine 86, and lysine 97. Residues leucine 122 and arginine 123 each contribute to the (2R)-3-phosphoglycerate site. N6-acetyllysine is present on residues lysine 131 and lysine 146. The (2R)-3-phosphoglycerate site is built by histidine 170 and arginine 171. Position 196 is a phosphotyrosine (tyrosine 196). Lysine 199 carries the N6-acetyllysine modification. Glycine 214 lines the ADP pocket. Glycine 214 contacts CDP. Positions 215 and 216 each coordinate AMP. An ATP-binding site is contributed by alanine 215. Residue alanine 215 coordinates Mg(2+). The Mg(2+) site is built by alanine 218 and aspartate 219. Residue aspartate 219 participates in CDP binding. Lysine 220 lines the AMP pocket. Residue lysine 220 participates in ATP binding. Glycine 238 serves as a coordination point for ADP. Glycine 238 contacts CDP. Glycine 239 is a binding site for AMP. Glycine 239 provides a ligand contact to ATP. Residues lysine 267 and lysine 291 each carry the N6-acetyllysine modification. Glycine 313 is a binding site for AMP. Glycine 313 contributes to the ATP binding site. CDP is bound by residues glycine 338, valine 340, and phenylalanine 343. Residue phenylalanine 343 participates in ADP binding. Glutamate 344 is an AMP binding site. ATP-binding residues include glutamate 344, aspartate 375, and threonine 376. Aspartate 375 contributes to the Mg(2+) binding site.

The protein belongs to the phosphoglycerate kinase family. In terms of assembly, monomer. Mg(2+) is required as a cofactor.

It is found in the cytoplasm. It carries out the reaction (2R)-3-phosphoglycerate + ATP = (2R)-3-phospho-glyceroyl phosphate + ADP. It participates in carbohydrate degradation; glycolysis; pyruvate from D-glyceraldehyde 3-phosphate: step 2/5. In terms of biological role, essential for sperm motility and male fertility but is not required for the completion of spermatogenesis. The polypeptide is Phosphoglycerate kinase 2 (PGK2) (Equus caballus (Horse)).